We begin with the raw amino-acid sequence, 180 residues long: NADH-quinone oxidoreductase subunit I (180 aa).

4Fe-4S ferredoxin-type domains lie at 48–80 (IVLT…LQKA) and 90–119 (EFFR…LTPD). [4Fe-4S] cluster contacts are provided by cysteine 60, cysteine 63, cysteine 66, cysteine 70, cysteine 99, cysteine 102, cysteine 105, and cysteine 109.

This sequence belongs to the complex I 23 kDa subunit family. In terms of assembly, NDH-1 is composed of 13 different subunits. Subunits NuoA, H, J, K, L, M, N constitute the membrane sector of the complex. [4Fe-4S] cluster serves as cofactor.

The protein resides in the cell inner membrane. The catalysed reaction is a quinone + NADH + 5 H(+)(in) = a quinol + NAD(+) + 4 H(+)(out). Its function is as follows. NDH-1 shuttles electrons from NADH, via FMN and iron-sulfur (Fe-S) centers, to quinones in the respiratory chain. The immediate electron acceptor for the enzyme in this species is believed to be ubiquinone. Couples the redox reaction to proton translocation (for every two electrons transferred, four hydrogen ions are translocated across the cytoplasmic membrane), and thus conserves the redox energy in a proton gradient. The sequence is that of NADH-quinone oxidoreductase subunit I from Edwardsiella ictaluri (strain 93-146).